An 89-amino-acid chain; its full sequence is Elongation factor 1-beta (89 aa).

It belongs to the EF-1-beta/EF-1-delta family.

Its function is as follows. Promotes the exchange of GDP for GTP in EF-1-alpha/GDP, thus allowing the regeneration of EF-1-alpha/GTP that could then be used to form the ternary complex EF-1-alpha/GTP/AAtRNA. The chain is Elongation factor 1-beta from Methanococcus maripaludis (strain DSM 14266 / JCM 13030 / NBRC 101832 / S2 / LL).